The sequence spans 355 residues: UDP-N-acetylglucosamine--N-acetylmuramyl-(pentapeptide) pyrophosphoryl-undecaprenol N-acetylglucosamine transferase (355 aa).

Residues 15 to 17 (TGG), Asn-127, Arg-163, Ser-191, Ile-244, 263 to 268 (ALTVSE), and Gln-288 contribute to the UDP-N-acetyl-alpha-D-glucosamine site.

The protein belongs to the glycosyltransferase 28 family. MurG subfamily.

The protein localises to the cell inner membrane. The enzyme catalyses di-trans,octa-cis-undecaprenyl diphospho-N-acetyl-alpha-D-muramoyl-L-alanyl-D-glutamyl-meso-2,6-diaminopimeloyl-D-alanyl-D-alanine + UDP-N-acetyl-alpha-D-glucosamine = di-trans,octa-cis-undecaprenyl diphospho-[N-acetyl-alpha-D-glucosaminyl-(1-&gt;4)]-N-acetyl-alpha-D-muramoyl-L-alanyl-D-glutamyl-meso-2,6-diaminopimeloyl-D-alanyl-D-alanine + UDP + H(+). It functions in the pathway cell wall biogenesis; peptidoglycan biosynthesis. Its function is as follows. Cell wall formation. Catalyzes the transfer of a GlcNAc subunit on undecaprenyl-pyrophosphoryl-MurNAc-pentapeptide (lipid intermediate I) to form undecaprenyl-pyrophosphoryl-MurNAc-(pentapeptide)GlcNAc (lipid intermediate II). This is UDP-N-acetylglucosamine--N-acetylmuramyl-(pentapeptide) pyrophosphoryl-undecaprenol N-acetylglucosamine transferase from Shigella flexneri serotype 5b (strain 8401).